The chain runs to 151 residues: SsrA-binding protein (151 aa).

Residues lysine 131 to lysine 151 are disordered.

It belongs to the SmpB family.

It is found in the cytoplasm. Its function is as follows. Required for rescue of stalled ribosomes mediated by trans-translation. Binds to transfer-messenger RNA (tmRNA), required for stable association of tmRNA with ribosomes. tmRNA and SmpB together mimic tRNA shape, replacing the anticodon stem-loop with SmpB. tmRNA is encoded by the ssrA gene; the 2 termini fold to resemble tRNA(Ala) and it encodes a 'tag peptide', a short internal open reading frame. During trans-translation Ala-aminoacylated tmRNA acts like a tRNA, entering the A-site of stalled ribosomes, displacing the stalled mRNA. The ribosome then switches to translate the ORF on the tmRNA; the nascent peptide is terminated with the 'tag peptide' encoded by the tmRNA and targeted for degradation. The ribosome is freed to recommence translation, which seems to be the essential function of trans-translation. The chain is SsrA-binding protein from Rickettsia bellii (strain OSU 85-389).